A 289-amino-acid polypeptide reads, in one-letter code: Protease HtpX homolog (289 aa).

2 helical membrane-spanning segments follow: residues 8–28 (LALLAALSGLLIAISYWVIGG) and 29–49 (SSGLMIGIGLAAVTNLLSWYQ). Residue histidine 132 participates in Zn(2+) binding. The active site involves glutamate 133. Residue histidine 136 participates in Zn(2+) binding. Helical transmembrane passes span 151–171 (VAGAISFLAQMVSYSLWFGGI) and 183–203 (LGVLLTVVLAPIAATIIQLAI). A Zn(2+)-binding site is contributed by glutamate 208.

Belongs to the peptidase M48B family. The cofactor is Zn(2+).

The protein resides in the cell inner membrane. In Nostoc sp. (strain PCC 7120 / SAG 25.82 / UTEX 2576), this protein is Protease HtpX homolog.